Here is a 643-residue protein sequence, read N- to C-terminus: Threonine--tRNA ligase (643 aa).

The TGS domain maps to Met1–Thr61. Residues Asp243 to Pro534 are catalytic. Cys334, His385, and His511 together coordinate Zn(2+).

Belongs to the class-II aminoacyl-tRNA synthetase family. Homodimer. The cofactor is Zn(2+).

The protein localises to the cytoplasm. It carries out the reaction tRNA(Thr) + L-threonine + ATP = L-threonyl-tRNA(Thr) + AMP + diphosphate + H(+). Functionally, catalyzes the attachment of threonine to tRNA(Thr) in a two-step reaction: L-threonine is first activated by ATP to form Thr-AMP and then transferred to the acceptor end of tRNA(Thr). Also edits incorrectly charged L-seryl-tRNA(Thr). This chain is Threonine--tRNA ligase, found in Pasteurella multocida (strain Pm70).